A 100-amino-acid chain; its full sequence is Small ribosomal subunit protein bS20 (100 aa).

A compositionally biased stretch (basic and acidic residues) spans 1–18; that stretch reads MPNKKSAEKRVRQSEQRR. The interval 1-26 is disordered; the sequence is MPNKKSAEKRVRQSEQRRQKNRGYQK.

The protein belongs to the bacterial ribosomal protein bS20 family.

Binds directly to 16S ribosomal RNA. The sequence is that of Small ribosomal subunit protein bS20 from Petrotoga mobilis (strain DSM 10674 / SJ95).